Consider the following 113-residue polypeptide: Large ribosomal subunit protein uL22 (113 aa).

This sequence belongs to the universal ribosomal protein uL22 family. In terms of assembly, part of the 50S ribosomal subunit.

This protein binds specifically to 23S rRNA; its binding is stimulated by other ribosomal proteins, e.g. L4, L17, and L20. It is important during the early stages of 50S assembly. It makes multiple contacts with different domains of the 23S rRNA in the assembled 50S subunit and ribosome. In terms of biological role, the globular domain of the protein is located near the polypeptide exit tunnel on the outside of the subunit, while an extended beta-hairpin is found that lines the wall of the exit tunnel in the center of the 70S ribosome. This Geobacillus kaustophilus (strain HTA426) protein is Large ribosomal subunit protein uL22.